The chain runs to 201 residues: Small ribosomal subunit protein uS4c (201 aa).

Residues 16-37 are disordered; that stretch reads GALPGLTSKRPRSGSDLRNQSR. One can recognise an S4 RNA-binding domain in the interval 89–152; the sequence is MRLDNTLFRL…RSRTLIQNHI (64 aa).

It belongs to the universal ribosomal protein uS4 family. In terms of assembly, part of the 30S ribosomal subunit. Contacts protein S5. The interaction surface between S4 and S5 is involved in control of translational fidelity.

The protein resides in the plastid. The protein localises to the chloroplast. In terms of biological role, one of the primary rRNA binding proteins, it binds directly to 16S rRNA where it nucleates assembly of the body of the 30S subunit. Functionally, with S5 and S12 plays an important role in translational accuracy. The polypeptide is Small ribosomal subunit protein uS4c (rps4) (Chloranthus spicatus (Chulantree)).